Here is a 310-residue protein sequence, read N- to C-terminus: N-acetyl-gamma-glutamyl-phosphate reductase (310 aa).

Residue Cys117 is part of the active site.

This sequence belongs to the NAGSA dehydrogenase family. Type 2 subfamily.

Its subcellular location is the cytoplasm. The catalysed reaction is N-acetyl-L-glutamate 5-semialdehyde + phosphate + NADP(+) = N-acetyl-L-glutamyl 5-phosphate + NADPH + H(+). It participates in amino-acid biosynthesis; L-arginine biosynthesis; N(2)-acetyl-L-ornithine from L-glutamate: step 3/4. Functionally, catalyzes the NADPH-dependent reduction of N-acetyl-5-glutamyl phosphate to yield N-acetyl-L-glutamate 5-semialdehyde. This is N-acetyl-gamma-glutamyl-phosphate reductase from Rhizobium leguminosarum bv. trifolii (strain WSM2304).